Reading from the N-terminus, the 433-residue chain is Tol-Pal system protein TolB (433 aa).

Positions 1–26 (MNKLRLFRSFFAFLLPFGMATGAAHG) are cleaved as a signal peptide.

The protein belongs to the TolB family. As to quaternary structure, the Tol-Pal system is composed of five core proteins: the inner membrane proteins TolA, TolQ and TolR, the periplasmic protein TolB and the outer membrane protein Pal. They form a network linking the inner and outer membranes and the peptidoglycan layer.

It is found in the periplasm. Functionally, part of the Tol-Pal system, which plays a role in outer membrane invagination during cell division and is important for maintaining outer membrane integrity. The sequence is that of Tol-Pal system protein TolB from Methylobacillus flagellatus (strain ATCC 51484 / DSM 6875 / VKM B-1610 / KT).